The primary structure comprises 148 residues: Receptor activity-modifying protein 1 (148 aa).

The first 26 residues, 1-26, serve as a signal peptide directing secretion; it reads MAPGLRGLPRCGLWLLLAHHLFMVTA. Disulfide bonds link Cys27–Cys82, Cys40–Cys72, and Cys57–Cys104. Residues 27–118 are Extracellular-facing; sequence CRDPDYGTLI…RALRDPPNSI (92 aa). Residues 119 to 140 form a helical membrane-spanning segment; that stretch reads LCPFIALPITVTLLMTALVVWR. Over 141–148 the chain is Cytoplasmic; the sequence is SKRTEGIV.

This sequence belongs to the RAMP family. As to quaternary structure, heterodimer of CALCRL and RAMP1; the interaction induces allosteric modulation of CALCRL function and CGRP1/CALCA and CGRP2/CALCB ligand specificity. Heterodimer of CALCR and RAMP1; interaction forms the AMYR1 receptor complex for amylin/IAPP and CGRP1/CALCA ligands. Expressed predominantly in the thymus, skeletal muscle, embryonic and adult brain, embryonic and adult lung, and colon.

It localises to the cell membrane. Its function is as follows. Accessory protein that interacts with and modulates the function of G-protein coupled receptors including calcitonin gene-related peptide type 1 receptor (CALCRL) and calcitonin receptor (CALCR). Required for the transport of CALCRL to the plasma membrane. Together with CALCRL, form the receptor complex for the calcitonin gene-related peptides CGRP1/CALCA and CGRP2/CALCB. Together with CALCR, form the AMYR1 receptor complex for amylin/IAPP and CGRP1/CALCA. The sequence is that of Receptor activity-modifying protein 1 from Mus musculus (Mouse).